A 523-amino-acid chain; its full sequence is MFS-type transporter R5 (523 aa).

The segment at 19-42 (QLNEATAQRESATNNPNDSSSIDE) is disordered. Positions 21 to 38 (NEATAQRESATNNPNDSS) are enriched in polar residues. N-linked (GlcNAc...) asparagine glycans are attached at residues asparagine 35, asparagine 94, and asparagine 143. Helical transmembrane passes span 183–203 (AYLT…GGLL) and 211–231 (AIFW…FTFF). Asparagine 235 and asparagine 250 each carry an N-linked (GlcNAc...) asparagine glycan. Helical transmembrane passes span 291 to 311 (FIVC…ISIF), 319 to 339 (YGYS…GSIL), 381 to 401 (LTIS…YGWL), 408 to 428 (VASV…VLIA), 443 to 463 (ALGA…VAAV), and 470 to 490 (IGIG…LPAL).

The protein belongs to the major facilitator superfamily.

Its subcellular location is the membrane. Functionally, MFS-type transporter; part of the gene cluster that mediates the biosynthesis of squalestatin S1 (SQS1, also known as zaragozic acid A), a heavily oxidized fungal polyketide that offers potent cholesterol lowering activity by targeting squalene synthase (SS). The sequence is that of MFS-type transporter R5 from Phoma sp. (strain ATCC 20986 / MF5453).